A 33-amino-acid chain; its full sequence is Pardaxin P-5 (33 aa).

This sequence belongs to the pardaxin family. Monomer. In aqueous solution exists as a tetramer.

It localises to the secreted. The protein localises to the target cell membrane. In terms of biological role, exhibits unusual shark repellent and surfactant properties. Forms voltage-dependent, ion-permeable channels in membranes. At high concentration causes cell membrane lysis. The polypeptide is Pardaxin P-5 (Pardachirus marmoratus (Finless sole)).